Reading from the N-terminus, the 293-residue chain is Sodium-type flagellar protein MotY (293 aa).

Residues 1-21 (MNKWLITSGVMLSLLSANSYA) form the signal peptide. The 118-residue stretch at 175–292 (YSFEDIAFTI…RVVISLGRTQ (118 aa)) folds into the OmpA-like domain.

It localises to the cell membrane. Functionally, may play the role of a stator in the sodium flagellar motor, stabilizing the force-generating unit through direct interaction with the cell wall. This Vibrio parahaemolyticus serotype O3:K6 (strain RIMD 2210633) protein is Sodium-type flagellar protein MotY.